Here is a 164-residue protein sequence, read N- to C-terminus: Peptidyl-prolyl cis-trans isomerase A-like 4F (164 aa).

Positions 7-163 (FFEITRDGKP…KKITIADCGQ (157 aa)) constitute a PPIase cyclophilin-type domain.

The protein belongs to the cyclophilin-type PPIase family. PPIase A subfamily.

Its subcellular location is the cytoplasm. The enzyme catalyses [protein]-peptidylproline (omega=180) = [protein]-peptidylproline (omega=0). Functionally, PPIases accelerate the folding of proteins. It catalyzes the cis-trans isomerization of proline imidic peptide bonds in oligopeptides. The sequence is that of Peptidyl-prolyl cis-trans isomerase A-like 4F from Homo sapiens (Human).